Reading from the N-terminus, the 182-residue chain is Inner membrane-spanning protein YciB (182 aa).

A run of 5 helical transmembrane segments spans residues 22 to 42 (IYIASGALIAATALQLIVTYA), 50 to 70 (MHLITFVMVTFFGTLTLIFHD), 72 to 92 (AFIKWKVTVVYALFAIALAVS), 118 to 138 (VTWYWVSFFVACGLVNIYVAF), and 148 to 168 (FKVFGLTALTLINTVITVVYL).

The protein belongs to the YciB family.

The protein localises to the cell inner membrane. Functionally, plays a role in cell envelope biogenesis, maintenance of cell envelope integrity and membrane homeostasis. The chain is Inner membrane-spanning protein YciB from Shewanella woodyi (strain ATCC 51908 / MS32).